Here is a 92-residue protein sequence, read N- to C-terminus: Small ribosomal subunit protein uS19c (92 aa).

It belongs to the universal ribosomal protein uS19 family.

It is found in the plastid. It localises to the chloroplast. Its function is as follows. Protein S19 forms a complex with S13 that binds strongly to the 16S ribosomal RNA. In Chloranthus spicatus (Chulantree), this protein is Small ribosomal subunit protein uS19c.